We begin with the raw amino-acid sequence, 102 residues long: Large ribosomal subunit protein bL21 (102 aa).

It belongs to the bacterial ribosomal protein bL21 family. As to quaternary structure, part of the 50S ribosomal subunit. Contacts protein L20.

In terms of biological role, this protein binds to 23S rRNA in the presence of protein L20. The polypeptide is Large ribosomal subunit protein bL21 (Staphylococcus aureus).